Here is a 363-residue protein sequence, read N- to C-terminus: Cyanuric acid amidohydrolase (363 aa).

Residues 1 to 104 (MYHIDVFRIP…TVFARRPAID (104 aa)) are RU A. Substrate is bound by residues arginine 52 and 83 to 84 (SG). The segment at 112-249 (RLTLGIAFTR…NVVIAIGMSE (138 aa)) is RU B. Lysine 162 is an active-site residue. Substrate-binding positions include arginine 194 and 232–233 (SA). Serine 232 serves as the catalytic Nucleophile. Positions 255-363 (LVIAHGVMSD…GGPFAVIARA (109 aa)) are RU C. Position 297 (glutamate 297) interacts with Mg(2+). Residues arginine 324 and 343–344 (SG) each bind substrate. The Mg(2+) site is built by alanine 346, glutamine 349, glycine 350, proline 351, and glycine 354.

Belongs to the cyclic amide hydrolase (CyAH) family. As to quaternary structure, homotetramer.

It catalyses the reaction cyanurate + H2O = 1-carboxybiuret + H(+). It participates in xenobiotic degradation; atrazine degradation; biuret from cyanurate: step 1/1. With respect to regulation, inhibited by barbituric acid. Functionally, responsible for the hydrolysis of cyanuric acid, an intermediate formed during catabolism of s-triazine based compounds in herbicides such as atrazine and polymers such as melamine. Catalyzes the hydrolytic opening of the s-triazine ring of cyanuric acid (2,4,6-trihydroxy-s-triazine) to yield carbon dioxide and carboxybiuret, which spontaneously decarboxylates to biuret. The polypeptide is Cyanuric acid amidohydrolase (atzD) (Pseudomonas sp. (strain ADP)).